Reading from the N-terminus, the 703-residue chain is Arylphorin subunit beta (703 aa).

Residues 1-16 (MKTVIILAGLVALALG) form the signal peptide. N-linked (GlcNAc...) asparagine glycosylation is found at asparagine 72 and asparagine 211.

This sequence belongs to the hemocyanin family. Arylphorin is a hexamer of subunits alpha and beta. In terms of tissue distribution, fat body.

Its subcellular location is the secreted. The protein localises to the extracellular space. Functionally, arylphorin is a larval storage protein (LSP) which may serve as a storage protein used primarily as a source of aromatic amino acids for protein synthesis during metamorphosis. It is a constituent of the sclerotizing system of the cuticle, and serves as a carrier for ecdysteroid hormone. The polypeptide is Arylphorin subunit beta (Manduca sexta (Tobacco hawkmoth)).